The primary structure comprises 923 residues: TBC1 domain family member 2A (923 aa).

At M1 the chain carries N-acetylmethionine. The segment at 1–39 (MDGAHENAAESSSSVPRSEEPACSAGGPEVLPPEESEGC) is disordered. The tract at residues 1–171 (MDGAHENAAE…AGNGPTLRLE (171 aa)) is interaction with CADH1. Residues 47 to 144 (PKKLCGYLSK…WLQQLQTKRW (98 aa)) form the PH domain. Disordered regions lie at residues 146–166 (FHSS…GNGP) and 232–289 (RQAQ…LIQK). The tract at residues 301 to 439 (AEGLTRTRTA…KVTWDFTHPP (139 aa)) is interaction with RAC1. Residues 308-486 (RTAQEKILAL…LNSEIHQVTK (179 aa)) adopt a coiled-coil conformation. The 193-residue stretch at 631–823 (GVPREHRPRV…RVWDAFLYEG (193 aa)) folds into the Rab-GAP TBC domain. A coiled-coil region spans residues 870-904 (MKQLRQLRRAHRERLEAELHELEQLKAEYLETQSS). The segment at 900-923 (ETQSSRGPAVPDGCTSEDEGEGEA) is disordered. A compositionally biased stretch (acidic residues) spans 914-923 (TSEDEGEGEA). At S915 the chain carries Phosphoserine.

In terms of assembly, interacts with activated RAC1 and CDH1.

The protein localises to the cytoplasm. The protein resides in the cytoplasmic vesicle. Its subcellular location is the cell junction. Functionally, acts as a GTPase-activating protein for RAB7A. Signal effector acting as a linker between RAC1 and RAB7A, leading to RAB7A inactivation and subsequent inhibition of cadherin degradation and reduced cell-cell adhesion. This is TBC1 domain family member 2A (TBC1D2) from Ailuropoda melanoleuca (Giant panda).